The sequence spans 121 residues: Large ribosomal subunit protein uL18 (121 aa).

It belongs to the universal ribosomal protein uL18 family. Part of the 50S ribosomal subunit; part of the 5S rRNA/L5/L18/L25 subcomplex. Contacts the 5S and 23S rRNAs.

Its function is as follows. This is one of the proteins that bind and probably mediate the attachment of the 5S RNA into the large ribosomal subunit, where it forms part of the central protuberance. The polypeptide is Large ribosomal subunit protein uL18 (Herpetosiphon aurantiacus (strain ATCC 23779 / DSM 785 / 114-95)).